We begin with the raw amino-acid sequence, 554 residues long: MAATGYPVLILKEGTQRTYGREALRANILAARVLAEMLKSSLGPRGLDKMLVDAFGDITVTNDGATIVKEMEIQHPAAKLLVEVAKAQDAEVGDGTTSVVVLAGALLEKAEKLLDENLHPTIIIEGYTKAMEEALRLVDEAAVPVEVEDDSVLRRIAETTLASKFVGTGPERDKIISMVIDAIRTVAEKRPDGGYEVDLDYVKIEKKKGGSLLDSKLVRGIVLDKEVVHPAMPKRVENAKILVLDAPLEVQKPELTTKIRVTDIEKLESFLEEETRMLRDMVEKIAATGANVVITQKGIDEVAQHFLAKKGILAVRRVKRSDIEKVAKATGAKIVTSLRDLKPEYLGYAELVEERKVGEDKMVFIEGAKNPKSVTILLRGANDMLLDEAERNIKDALHGLRNILREPKIVGGGGAVEVELALKLKEFARTVGGKQQLAIEAYAEALETIPTVLAESAGMDALEALLKLRSLHSQGYKFAGVNVLEGKIEEDMTKINVYEPVLVKKQVIKSASEAAISILKIDDVIAAAPPKKKEKKGKTGEEEEEEGGGSKFEF.

A disordered region spans residues 530–554; the sequence is PKKKEKKGKTGEEEEEEGGGSKFEF.

It belongs to the TCP-1 chaperonin family. In terms of assembly, forms a Heterooligomeric complex of two stacked eight-membered rings.

Molecular chaperone; binds unfolded polypeptides in vitro, and has a weak ATPase activity. The protein is Thermosome subunit alpha (thsA) of Aeropyrum pernix (strain ATCC 700893 / DSM 11879 / JCM 9820 / NBRC 100138 / K1).